Reading from the N-terminus, the 206-residue chain is Imidazoleglycerol-phosphate dehydratase (206 aa).

The protein belongs to the imidazoleglycerol-phosphate dehydratase family.

Its subcellular location is the cytoplasm. The enzyme catalyses D-erythro-1-(imidazol-4-yl)glycerol 3-phosphate = 3-(imidazol-4-yl)-2-oxopropyl phosphate + H2O. It participates in amino-acid biosynthesis; L-histidine biosynthesis; L-histidine from 5-phospho-alpha-D-ribose 1-diphosphate: step 6/9. The sequence is that of Imidazoleglycerol-phosphate dehydratase from Saccharopolyspora erythraea (strain ATCC 11635 / DSM 40517 / JCM 4748 / NBRC 13426 / NCIMB 8594 / NRRL 2338).